Here is a 173-residue protein sequence, read N- to C-terminus: Cytochrome c-type biogenesis protein CcmE (173 aa).

The Cytoplasmic segment spans residues 1-8 (MMSRKKRR). A helical; Signal-anchor for type II membrane protein transmembrane segment spans residues 9–29 (LWIVIACGIGLSTAVALMLFA). Topologically, residues 30 to 173 (FRSSLSFFMS…PAQIEASNNG (144 aa)) are periplasmic. Residues His127 and Tyr131 each coordinate heme. The segment at 145–173 (KWNPKFGPPPNAGAWDDKSPAQIEASNNG) is disordered.

Belongs to the CcmE/CycJ family.

The protein resides in the cell inner membrane. Its function is as follows. Heme chaperone required for the biogenesis of c-type cytochromes. Transiently binds heme delivered by CcmC and transfers the heme to apo-cytochromes in a process facilitated by CcmF and CcmH. In Acidiphilium cryptum (strain JF-5), this protein is Cytochrome c-type biogenesis protein CcmE.